The chain runs to 479 residues: GTPase Der (479 aa).

EngA-type G domains follow at residues 3 to 167 (FKVA…GEAR) and 208 to 383 (MRIA…KVWN). Residues 9 to 16 (GRPNVGKS), 56 to 60 (DTAGF), 119 to 122 (NKAE), 214 to 221 (GRPNAGKS), 261 to 265 (DTAGM), and 326 to 329 (NKWD) each bind GTP. A KH-like domain is found at 384–468 (SRVSTGKLNR…PIRIALRTSD (85 aa)).

This sequence belongs to the TRAFAC class TrmE-Era-EngA-EngB-Septin-like GTPase superfamily. EngA (Der) GTPase family. In terms of assembly, associates with the 50S ribosomal subunit.

Its function is as follows. GTPase that plays an essential role in the late steps of ribosome biogenesis. The polypeptide is GTPase Der (Mesorhizobium japonicum (strain LMG 29417 / CECT 9101 / MAFF 303099) (Mesorhizobium loti (strain MAFF 303099))).